The primary structure comprises 306 residues: tRNA pseudouridine synthase B (306 aa).

Aspartate 48 serves as the catalytic Nucleophile.

Belongs to the pseudouridine synthase TruB family. Type 1 subfamily.

It catalyses the reaction uridine(55) in tRNA = pseudouridine(55) in tRNA. Functionally, responsible for synthesis of pseudouridine from uracil-55 in the psi GC loop of transfer RNAs. The sequence is that of tRNA pseudouridine synthase B from Ectopseudomonas mendocina (strain ymp) (Pseudomonas mendocina).